The sequence spans 985 residues: MAGLKSFLASSWLLPVACGASQSIVPSTSATAAYSQFTIPASADVGANLVANIDDPQAVNAQSVCPGYKASDVKHSSQGFTASLELAGDPCNVYGTDVDSLTLTVEYQAKDRLNIQIVPTYFDASNASWYILSEELVPRPKASQNASVPQSDFVVSWSNEPSFNFKVIRKATGDVLFNTKGSTLVYENQFIEFVTLLPEEYNLYGLGERMNQLRLLENANLTLYAADIADPIDDNIYGHHAFYLDTRYYKVGGQNKSHTIVKSSEAEPSQEYVSYSHGVFLRNAHGQEILLRDQKLIWRTLGGSVDLTFYSGPTQAEVTKQYQLSTVGLPAMQQYNTLGFHQCRWGYNNWSEFEDVLANFERFEIPLEYLWADIDYMHGYRNFDNDQHRFSYEEGEKFLNKLHAGGRRWVPIVDGALYIPNPENASDAYETYDRGAKDDVFIKNPDGSLYIGAVWPGYTVYPDWHHPKASDFWANELVTWWNKLHYDGVWYDMAEVSSFCVGSCGTGNLSMNPAHPPFALPGEPGNVVYDYPEGFNITNATEAASASAGAASQSAAASSTTTSAPYLRTTPTPGVRNVDHPPYVINHVQPGHDLSVHAISPNSTHSDGVQEYDVHSLYGHQGINATYHGLLKVWENKRPFIIARSTFSGSGKWAGHWGGDNFSKWGSMFFSISQALQFSLFGIPMFGVDTCGFNGNTDEELCNRWMQLSAFFPFYRNHNVLSAIPQEPYRWASVIDATKAAMNIRYAILPYFYTLFHLAHTTGSTVMRALAWEFPNDPSLAAVGTQFLVGPSVMVIPVLEPQVDTVQGVFPGVGHGEVWYDWYSQTAVDAKPGVNTTISAPLGHIPVFVRGGSILPMQEVALTTRDARKTPWSLLASLSSNGTASGQLYLDDGESVYPEDTLSVDFLASRSTLRASARGTWKEANPLANVTVLGVTEKPSSVTLNGETLSSDSVKYNATSHVLHVGGLQKHTADGAWAKDWVLKW.

Positions 1-25 (MAGLKSFLASSWLLPVACGASQSIV) are cleaved as a signal peptide. N-linked (GlcNAc...) asparagine glycosylation is found at Asn126, Asn145, Asn220, Asn255, Asn349, and Asn424. Residue Asp492 is the Nucleophile of the active site. The active site involves Glu495. 5 N-linked (GlcNAc...) asparagine glycosylation sites follow: Asn508, Asn536, Asn539, Asn602, and Asn624. Asp660 (proton donor) is an active-site residue. Residues Asn661, Asn835, Asn881, Asn929, and Asn957 are each glycosylated (N-linked (GlcNAc...) asparagine).

This sequence belongs to the glycosyl hydrolase 31 family.

It carries out the reaction Hydrolysis of terminal, non-reducing (1-&gt;4)-linked alpha-D-glucose residues with release of alpha-D-glucose.. Its function is as follows. Hydrolyzes malto-oligosaccharides, but has a low activity toward soluble starch. The sequence is that of Alpha-glucosidase (agdA) from Aspergillus oryzae (strain ATCC 42149 / RIB 40) (Yellow koji mold).